Here is a 104-residue protein sequence, read N- to C-terminus: Large ribosomal subunit protein uL24 (104 aa).

The protein belongs to the universal ribosomal protein uL24 family. Part of the 50S ribosomal subunit.

One of two assembly initiator proteins, it binds directly to the 5'-end of the 23S rRNA, where it nucleates assembly of the 50S subunit. Functionally, one of the proteins that surrounds the polypeptide exit tunnel on the outside of the subunit. This chain is Large ribosomal subunit protein uL24, found in Pseudomonas syringae pv. syringae (strain B728a).